We begin with the raw amino-acid sequence, 335 residues long: Fructose-1,6-bisphosphatase class 1 (335 aa).

Mg(2+) contacts are provided by Glu-92, Asp-114, Leu-116, and Asp-117. Substrate is bound by residues Asp-117 to Ser-120, Asn-209, and Lys-275. Position 281 (Glu-281) interacts with Mg(2+).

It belongs to the FBPase class 1 family. As to quaternary structure, homotetramer. Requires Mg(2+) as cofactor.

The protein localises to the cytoplasm. It catalyses the reaction beta-D-fructose 1,6-bisphosphate + H2O = beta-D-fructose 6-phosphate + phosphate. The protein operates within carbohydrate biosynthesis; gluconeogenesis. This is Fructose-1,6-bisphosphatase class 1 from Polaromonas sp. (strain JS666 / ATCC BAA-500).